The chain runs to 313 residues: Putative serine protease 29 (313 aa).

The segment covering 1-22 (MPTTPDPGSEPPARTPRPPPLT) has biased composition (pro residues). Residues 1 to 27 (MPTTPDPGSEPPARTPRPPPLTPGLSP) are disordered. The region spanning 68-310 (IVGGHNAPPG…YVPWILQQVG (243 aa)) is the Peptidase S1 domain. A disulfide bridge connects residues Cys-99 and Cys-115. Residue His-114 is the Charge relay system of the active site. A glycan (N-linked (GlcNAc...) asparagine) is linked at Asn-143. Asp-161 acts as the Charge relay system in catalysis. Intrachain disulfides connect Cys-193-Cys-268, Cys-226-Cys-249, and Cys-258-Cys-286. The active-site Charge relay system is the Ser-262.

It belongs to the peptidase S1 family.

The protein localises to the secreted. The protein is Putative serine protease 29 (PRSS29P) of Homo sapiens (Human).